Reading from the N-terminus, the 367-residue chain is Serine/threonine-protein kinase-transforming protein Rmil (367 aa).

Positions 1 to 64 are disordered; it reads EGGSTAGLSA…DSSDDWEIPD (64 aa). Residues 33 to 57 show a composition bias toward basic and acidic residues; that stretch reads QRERKSSSSSEDRNRMKTLGRRDSS. Positions 67–327 constitute a Protein kinase domain; the sequence is ITVGQRIGSG…PQILASIELL (261 aa). Residues 73–81 and Lys93 contribute to the ATP site; that span reads IGSGSFGTV. Asp186 serves as the catalytic Proton acceptor.

Belongs to the protein kinase superfamily. TKL Ser/Thr protein kinase family. RAF subfamily.

The catalysed reaction is L-seryl-[protein] + ATP = O-phospho-L-seryl-[protein] + ADP + H(+). It carries out the reaction L-threonyl-[protein] + ATP = O-phospho-L-threonyl-[protein] + ADP + H(+). This Avian retrovirus IC10 protein is Serine/threonine-protein kinase-transforming protein Rmil (V-RMIL).